Reading from the N-terminus, the 135-residue chain is Large ribosomal subunit protein mL41 (135 aa).

A mitochondrion-targeting transit peptide spans 1-13; sequence MGVLSALARGFVR.

Belongs to the mitochondrion-specific ribosomal protein mL41 family. Component of the mitochondrial ribosome large subunit (39S) which comprises a 16S rRNA and about 50 distinct proteins.

It is found in the mitochondrion. Component of the mitochondrial ribosome large subunit. Also involved in apoptosis and cell cycle. The sequence is that of Large ribosomal subunit protein mL41 (mrpl41) from Danio rerio (Zebrafish).